Consider the following 239-residue polypeptide: uncharacterized protein (239 aa).

Residues 1–23 (MKTMVAMLLAAVGVAVSASSTLA) form the signal peptide. The segment covering 220–230 (AHPKQTLRDQR) has biased composition (basic and acidic residues). Residues 220–239 (AHPKQTLRDQRPAGGDEITK) are disordered.

This is an uncharacterized protein from Sinorhizobium fredii (strain NBRC 101917 / NGR234).